A 227-amino-acid polypeptide reads, in one-letter code: MDNFGGNFFNSYSNNSNREVEGNQYFDPYFVKHRKRTTKAQLKVLEETFETNIRPDANMRKKLGEQLGMTPRSVQVWFQNRRAKIKKLTQKKMMQQENTDNTKGPDAAHGSSSPKECKYNSYYPYIPIQGPLEEFNVYPRDNSIYKHGMPQGMASPIMYEGFGYRGHEEYGYPYVQRYGGGEYYQMQYPYGMVQAQWHQPPGFRDDDYYHSARKQQYRGGAPNSEKM.

A DNA-binding region (homeobox) is located at residues 30-89 (FVKHRKRTTKAQLKVLEETFETNIRPDANMRKKLGEQLGMTPRSVQVWFQNRRAKIKKLT). Positions 88–115 (LTQKKMMQQENTDNTKGPDAAHGSSSPK) are disordered. A compositionally biased stretch (polar residues) spans 92–102 (KMMQQENTDNT).

Its subcellular location is the nucleus. The protein is Homeobox protein HD-10 (HD-10) of Encephalitozoon cuniculi (strain GB-M1) (Microsporidian parasite).